Consider the following 111-residue polypeptide: Ribonuclease P protein component (111 aa).

It belongs to the RnpA family. Consists of a catalytic RNA component (M1 or rnpB) and a protein subunit.

The catalysed reaction is Endonucleolytic cleavage of RNA, removing 5'-extranucleotides from tRNA precursor.. Its function is as follows. RNaseP catalyzes the removal of the 5'-leader sequence from pre-tRNA to produce the mature 5'-terminus. It can also cleave other RNA substrates such as 4.5S RNA. The protein component plays an auxiliary but essential role in vivo by binding to the 5'-leader sequence and broadening the substrate specificity of the ribozyme. This Streptococcus thermophilus (strain CNRZ 1066) protein is Ribonuclease P protein component.